The chain runs to 906 residues: NADH-quinone oxidoreductase subunit G (906 aa).

The 2Fe-2S ferredoxin-type domain maps to 2–83 (AKIYVDSKIY…GAIISIKSTE (82 aa)). Positions 34, 45, 48, and 67 each coordinate [2Fe-2S] cluster. Residues 83 to 122 (ESEVFRSAIVELLLTNHPHDCPVCEEGGHCHLQDMTVMVK) enclose the 4Fe-4S His(Cys)3-ligated-type domain. The [4Fe-4S] cluster site is built by His99, Cys103, Cys106, Cys112, Cys151, Cys154, Cys157, Cys201, Cys228, Cys231, Cys235, and Cys263. One can recognise a 4Fe-4S Mo/W bis-MGD-type domain in the interval 221-277 (MQYAPGICHNCSVGCNISIGERYGEIRRIENRYHENINHYLICDLGRFGYSHTNLNT).

Belongs to the complex I 75 kDa subunit family. As to quaternary structure, composed of 13 different subunits. Subunits NuoCD, E, F, and G constitute the peripheral sector of the complex. The cofactor is [2Fe-2S] cluster. [4Fe-4S] cluster is required as a cofactor.

It carries out the reaction a quinone + NADH + 5 H(+)(in) = a quinol + NAD(+) + 4 H(+)(out). NDH-1 shuttles electrons from NADH, via FMN and iron-sulfur (Fe-S) centers, to quinones in the respiratory chain. Couples the redox reaction to proton translocation (for every two electrons transferred, four hydrogen ions are translocated across the cytoplasmic membrane), and thus conserves the redox energy in a proton gradient. This Buchnera aphidicola subsp. Acyrthosiphon pisum (strain APS) (Acyrthosiphon pisum symbiotic bacterium) protein is NADH-quinone oxidoreductase subunit G (nuoG).